We begin with the raw amino-acid sequence, 278 residues long: uncharacterized protein (278 aa).

The protein resides in the cytoplasm. It localises to the nucleus. Its function is as follows. Probable methyltransferase. This is an uncharacterized protein from Schizosaccharomyces pombe (strain 972 / ATCC 24843) (Fission yeast).